Reading from the N-terminus, the 314-residue chain is Ketimine reductase mu-crystallin (314 aa).

Arg-47 contributes to the 3,3',5-triiodo-L-thyronine binding site. NADPH-binding residues include Ser-91, His-92, Arg-119, Ala-144, Val-146, Gln-147, Asn-168, Arg-169, Thr-170, Asn-173, Thr-205, Met-206, and Val-226. Glu-257 is a 3,3',5-triiodo-L-thyronine binding site. Ser-292 provides a ligand contact to NADPH.

The protein belongs to the ornithine cyclodeaminase/mu-crystallin family. As to quaternary structure, homodimer. Binds the thyroid hormone triiodothyronine (T3); T3 binding inhibits enzymatic activity. Expressed at high abundance in lens, but outside the lens it is preferentially expressed in neural tissues, retina and brain.

The protein resides in the cytoplasm. The enzyme catalyses L-pipecolate + NADP(+) = Delta(1)-piperideine-2-carboxylate + NADPH + H(+). It catalyses the reaction L-pipecolate + NAD(+) = Delta(1)-piperideine-2-carboxylate + NADH + H(+). It carries out the reaction L-proline + NADP(+) = 1-pyrroline-2-carboxylate + NADPH + H(+). The catalysed reaction is L-proline + NAD(+) = 1-pyrroline-2-carboxylate + NADH + H(+). The enzyme catalyses (3R)-1,4-thiomorpholine-3-carboxylate + NAD(+) = 3,4-dehydrothiomorpholine-3-carboxylate + NADH + 2 H(+). It catalyses the reaction (3R)-1,4-thiomorpholine-3-carboxylate + NADP(+) = 3,4-dehydrothiomorpholine-3-carboxylate + NADPH + 2 H(+). It carries out the reaction (S)-cystathionine ketimine + NADH + 2 H(+) = (3R,5S)-2,3,5,6,7-pentahydro-1,4-thiazepine-3,5-dicarboxylate + NAD(+). The catalysed reaction is (S)-cystathionine ketimine + NADPH + 2 H(+) = (3R,5S)-2,3,5,6,7-pentahydro-1,4-thiazepine-3,5-dicarboxylate + NADP(+). The enzyme catalyses (R)-lanthionine ketimine + NADPH + 2 H(+) = (3R,5R)-1,4-thiomorpholine-3,5-dicarboxylate + NADP(+). It catalyses the reaction Delta(2)-thiazoline-2-carboxylate + NADPH + 2 H(+) = L-thiazolidine-2-carboxylate + NADP(+). Catalyzes the NAD(P)H-dependent reduction of imine double bonds of a number of cyclic ketimine substrates, including sulfur-containing cyclic ketimines. Under physiological conditions, it efficiently catalyzes delta(1)-piperideine-2-carboxylate (P2C) and delta(1)-pyrroline-2-carboxylate (Pyr2C) reduction, suggesting a central role in lysine and glutamate metabolism. Additional substrates are delta(2)-thiazoline-2-carboxylate (T2C), 3,4-dehydrothiomorpholine-3-carboxylate (AECK), and (R)-lanthionine ketimine (LK) that is reduced at very low rate compared to other substrates. Also catalyzes the NAD(P)H-dependent reduction of (S)-cystathionine ketimine (CysK). The chain is Ketimine reductase mu-crystallin (CRYM) from Macropus fuliginosus (Western gray kangaroo).